A 533-amino-acid chain; its full sequence is ATP synthase F(1) complex catalytic subunit beta, mitochondrial (533 aa).

A mitochondrion-targeting transit peptide spans 1–53; it reads MLGLAGRCSAAAASAARPALRRAAGPSHGFLPLLLSRGAGPAAAVGARRDHAA. ADP contacts are provided by Gly-214, Val-215, Gly-216, Lys-217, Thr-218, and Val-219. ATP is bound at residue Gly-214. Residues Gly-214, Val-215, Gly-216, Lys-217, and Thr-218 each coordinate phosphate. ATP is bound by residues Gly-216, Lys-217, Thr-218, and Val-219. Thr-218 is a binding site for Mg(2+). Glu-243 is a binding site for Mg(2+). Arg-244 contacts ATP.

Homotrimer. Component of the ATP synthase complex composed at least of ATP5F1A/subunit alpha, ATP5F1B/subunit beta, ATP5MC1/subunit c (homooctomer), MT-ATP6/subunit a, MT-ATP8/subunit 8, ATP5ME/subunit e, ATP5MF/subunit f, ATP5MG/subunit g, ATP5MK/subunit k, ATP5MJ/subunit j, ATP5F1C/subunit gamma, ATP5F1D/subunit delta, ATP5F1E/subunit epsilon, ATP5PF/subunit F6, ATP5PB/subunit b, ATP5PD/subunit d, ATP5PO/subunit OSCP. ATP synthase complex consists of a soluble F(1) head domain (subunits alpha(3) and beta(3)) - the catalytic core - and a membrane F(0) domain - the membrane proton channel (subunits c, a, 8, e, f, g, k and j). These two domains are linked by a central stalk (subunits gamma, delta, and epsilon) rotating inside the F1 region and a stationary peripheral stalk (subunits F6, b, d, and OSCP).

The protein resides in the mitochondrion inner membrane. The catalysed reaction is ATP + H2O + 4 H(+)(in) = ADP + phosphate + 5 H(+)(out). In terms of biological role, catalytic subunit beta, of the mitochondrial membrane ATP synthase complex (F(1)F(0) ATP synthase or Complex V) that produces ATP from ADP in the presence of a proton gradient across the membrane which is generated by electron transport complexes of the respiratory chain. ATP synthase complex consist of a soluble F(1) head domain - the catalytic core - and a membrane F(1) domain - the membrane proton channel. These two domains are linked by a central stalk rotating inside the F(1) region and a stationary peripheral stalk. During catalysis, ATP synthesis in the catalytic domain of F(1) is coupled via a rotary mechanism of the central stalk subunits to proton translocation. In vivo, can only synthesize ATP although its ATP hydrolase activity can be activated artificially in vitro. With the subunit alpha (ATP5F1A), forms the catalytic core in the F(1) domain. This Gallus gallus (Chicken) protein is ATP synthase F(1) complex catalytic subunit beta, mitochondrial.